Here is a 290-residue protein sequence, read N- to C-terminus: N-acetylneuraminate lyase (290 aa).

Aceneuramate contacts are provided by serine 44 and threonine 45. Catalysis depends on tyrosine 133, which acts as the Proton donor. Catalysis depends on lysine 161, which acts as the Schiff-base intermediate with substrate. Aceneuramate-binding residues include threonine 163, glycine 185, aspartate 187, glutamate 188, and serine 204.

This sequence belongs to the DapA family. NanA subfamily. As to quaternary structure, homotetramer.

Its subcellular location is the cytoplasm. The enzyme catalyses aceneuramate = aldehydo-N-acetyl-D-mannosamine + pyruvate. It participates in amino-sugar metabolism; N-acetylneuraminate degradation; D-fructose 6-phosphate from N-acetylneuraminate: step 1/5. In terms of biological role, catalyzes the reversible aldol cleavage of N-acetylneuraminic acid (sialic acid; Neu5Ac) to form pyruvate and N-acetylmannosamine (ManNAc) via a Schiff base intermediate. The polypeptide is N-acetylneuraminate lyase (Fusobacterium nucleatum subsp. nucleatum (strain ATCC 25586 / DSM 15643 / BCRC 10681 / CIP 101130 / JCM 8532 / KCTC 2640 / LMG 13131 / VPI 4355)).